We begin with the raw amino-acid sequence, 310 residues long: Aspartate carbamoyltransferase catalytic subunit (310 aa).

Residues Arg58 and Thr59 each coordinate carbamoyl phosphate. L-aspartate is bound at residue Lys86. Carbamoyl phosphate-binding residues include Arg108, His136, and Gln139. Residues Arg169 and Arg224 each contribute to the L-aspartate site. The carbamoyl phosphate site is built by Gly265 and Pro266.

It belongs to the aspartate/ornithine carbamoyltransferase superfamily. ATCase family. As to quaternary structure, heterododecamer (2C3:3R2) of six catalytic PyrB chains organized as two trimers (C3), and six regulatory PyrI chains organized as three dimers (R2).

It catalyses the reaction carbamoyl phosphate + L-aspartate = N-carbamoyl-L-aspartate + phosphate + H(+). The protein operates within pyrimidine metabolism; UMP biosynthesis via de novo pathway; (S)-dihydroorotate from bicarbonate: step 2/3. Its function is as follows. Catalyzes the condensation of carbamoyl phosphate and aspartate to form carbamoyl aspartate and inorganic phosphate, the committed step in the de novo pyrimidine nucleotide biosynthesis pathway. The sequence is that of Aspartate carbamoyltransferase catalytic subunit from Geobacter sp. (strain M21).